The chain runs to 224 residues: Phosphoribosylformylglycinamidine synthase subunit PurQ (224 aa).

Residues 4–224 form the Glutamine amidotransferase type-1 domain; sequence RIGVITFPGT…YSALDSVLAS (221 aa). Cys87 (nucleophile) is an active-site residue. Active-site residues include His195 and Glu197.

Part of the FGAM synthase complex composed of 1 PurL, 1 PurQ and 2 PurS subunits.

It is found in the cytoplasm. The catalysed reaction is N(2)-formyl-N(1)-(5-phospho-beta-D-ribosyl)glycinamide + L-glutamine + ATP + H2O = 2-formamido-N(1)-(5-O-phospho-beta-D-ribosyl)acetamidine + L-glutamate + ADP + phosphate + H(+). It catalyses the reaction L-glutamine + H2O = L-glutamate + NH4(+). The protein operates within purine metabolism; IMP biosynthesis via de novo pathway; 5-amino-1-(5-phospho-D-ribosyl)imidazole from N(2)-formyl-N(1)-(5-phospho-D-ribosyl)glycinamide: step 1/2. Functionally, part of the phosphoribosylformylglycinamidine synthase complex involved in the purines biosynthetic pathway. Catalyzes the ATP-dependent conversion of formylglycinamide ribonucleotide (FGAR) and glutamine to yield formylglycinamidine ribonucleotide (FGAM) and glutamate. The FGAM synthase complex is composed of three subunits. PurQ produces an ammonia molecule by converting glutamine to glutamate. PurL transfers the ammonia molecule to FGAR to form FGAM in an ATP-dependent manner. PurS interacts with PurQ and PurL and is thought to assist in the transfer of the ammonia molecule from PurQ to PurL. This is Phosphoribosylformylglycinamidine synthase subunit PurQ from Mycobacterium leprae (strain TN).